A 414-amino-acid chain; its full sequence is Patatin-like protein 1 (414 aa).

One can recognise a PNPLA domain in the interval 22–228 (LSLDGGGVRG…TANNPTLVAM (207 aa)). A GXGXXG motif is present at residues 26 to 31 (GGGVRG). The short motif at 64–68 (GTSTG) is the GXSXG element. The Nucleophile role is filled by serine 66. Aspartate 215 (proton acceptor) is an active-site residue. The DGA/G signature appears at 215 to 217 (DGA). Serine 399 is modified (phosphoserine).

Belongs to the patatin family. Phosphorylated at Ser-399 by CPK3. Phosphorylation enhances PLP1 activity towards phosphatidylcholine. Expressed specifically in roots and root hairs.

The protein localises to the cytoplasm. Its function is as follows. Possesses non-specific lipolytic acyl hydrolase (LAH) activity. Catalyzes the hydrolysis of the neutral lipids monogalactosyldiacylglycerol (MGDG), digalactosyldiacylglycerol (DGDG) and phosphatidylglycerol (PG), and less efficiently the polar lipids phosphatidylcholine (PC) and phosphatidylinositol (PI), but not the storage lipid triacylglycerol (TAG). May play a role in root development. The protein is Patatin-like protein 1 (PLP1) of Arabidopsis thaliana (Mouse-ear cress).